Consider the following 135-residue polypeptide: MTMTDPIADMLTRLRNANQAYHDRVTMPYSKIKANIAEVLKAEGYISTWLVEEPEESVVGKRLVVELKYGQNRERSLAGIKRVSKPGLRVYAKSGELPRVLGGLGVAIISTSQGLLTDRQARKRSVGGEVLAFVW.

This sequence belongs to the universal ribosomal protein uS8 family. In terms of assembly, part of the 30S ribosomal subunit. Contacts proteins S5 and S12.

Its function is as follows. One of the primary rRNA binding proteins, it binds directly to 16S rRNA central domain where it helps coordinate assembly of the platform of the 30S subunit. In Salinispora arenicola (strain CNS-205), this protein is Small ribosomal subunit protein uS8.